Here is a 310-residue protein sequence, read N- to C-terminus: Coproporphyrin III ferrochelatase (310 aa).

Y13 provides a ligand contact to Fe-coproporphyrin III. An N-methylmesoporphyrin-binding site is contributed by Y13. A Mg(2+)-binding site is contributed by E20. R30 contributes to the Fe-coproporphyrin III binding site. R31–R33 contacts N-methylmesoporphyrin. Mg(2+) is bound at residue R46. Residues R46 to Y47, S54, and Y125 each bind Fe-coproporphyrin III. Residues H183 and K188 each coordinate N-methylmesoporphyrin. H183 is a Fe(2+) binding site. E264 lines the Fe(2+) pocket. Residues D268 and E272 each contribute to the Mg(2+) site.

This sequence belongs to the ferrochelatase family. As to quaternary structure, monomer. Interacts with frataxin/Fra.

The protein resides in the cytoplasm. It catalyses the reaction Fe-coproporphyrin III + 2 H(+) = coproporphyrin III + Fe(2+). The protein operates within porphyrin-containing compound metabolism; protoheme biosynthesis. Its activity is regulated as follows. Stimulated by Mg(2+). Inhibited by Cd(2+). Inhibited by N-methylmesoporphyrin (N-MeMP) and 2,4-disulfonic acid deuteroporphyrin IX (dSDP). In terms of biological role, involved in coproporphyrin-dependent heme b biosynthesis. Catalyzes the insertion of ferrous iron into coproporphyrin III to form Fe-coproporphyrin III. It can also insert iron into protoporphyrin IX. Has weaker activity with 2,4 disulfonate, deuteroporphyrin and 2,4 hydroxyethyl. In vitro, can also use Zn(2+) or Cu(2+). This is Coproporphyrin III ferrochelatase from Bacillus subtilis (strain 168).